The sequence spans 547 residues: Chaperonin GroEL (547 aa).

Residues 30–33, K51, 87–91, G415, and D496 contribute to the ATP site; these read TLGP and DGTTT. A disordered region spans residues 527-547; sequence ENTPDMPAMPPGGMGGMGGMY. Over residues 538–547 the composition is skewed to gly residues; that stretch reads GGMGGMGGMY.

The protein belongs to the chaperonin (HSP60) family. In terms of assembly, forms a cylinder of 14 subunits composed of two heptameric rings stacked back-to-back. Interacts with the co-chaperonin GroES.

The protein localises to the cytoplasm. The enzyme catalyses ATP + H2O + a folded polypeptide = ADP + phosphate + an unfolded polypeptide.. Its function is as follows. Together with its co-chaperonin GroES, plays an essential role in assisting protein folding. The GroEL-GroES system forms a nano-cage that allows encapsulation of the non-native substrate proteins and provides a physical environment optimized to promote and accelerate protein folding. The sequence is that of Chaperonin GroEL from Chlorobium phaeovibrioides (strain DSM 265 / 1930) (Prosthecochloris vibrioformis (strain DSM 265)).